A 634-amino-acid polypeptide reads, in one-letter code: MTNSNLRTENHFDYVKITLASPDRVMEWGQRTLPNGQVVGEVTKPETINYRTLKPEMDGLFCEKIFGPSKDWECHCGKYKRVRHRGIVCERCGVEVTESRVRRHRMGFIKLAAPVSHVWYLKGIPSYVAILLDMPLRDVEQIVYFNCYVVLDPGDHKELKYKQLLTEDEWLEIEDEIYAEDSTIENEPIVGIGAEALKQLLEDLNLAEVAEQLREDISSSKGQKRAKLIKRLRVIDNFIATNARPEWMVLDAIPVIPPDLRPMVQLDGGRFATSDLNDLYRRVINRNNRLARLQEILAPEIIVRNEKRMLQEAVDALIDNGRRGRTVVGANNRPLKSLSDIIEGKQGRFRQNLLGKRVDYSGRSVIVVGPKLKMHQCGLPKEMAIELFQPFVIHRLIRQNIVNNIKAAKKLIQRADDEVMQVLQEVIEGHPILLNRAPTLHRLGIQAFEPKLVAGRAIQLHPLVCPAFNADFDGDQMAVHVPLAIEAQTEARMLMLASNNILSPATGDPIITPSQDMVLGSYYLTAIKPGASVPEFGDQSRTYAGLEDVIHAFEDKRLLLHDWVWVRFNGEVEDEDEIDKPLKAESLSDGTRIEQWTYRRDRFDEDGALISRYILTTVGRVVMNYTIIDAVAAA.

Zn(2+) is bound by residues Cys-74, Cys-76, Cys-89, and Cys-92. Mg(2+) is bound by residues Asp-471, Asp-473, and Asp-475.

It belongs to the RNA polymerase beta' chain family. RpoC1 subfamily. In cyanobacteria the RNAP catalytic core is composed of 2 alpha, 1 beta, 1 beta', 1 gamma and 1 omega subunit. When a sigma factor is associated with the core the holoenzyme is formed, which can initiate transcription. The cofactor is Mg(2+). It depends on Zn(2+) as a cofactor.

The catalysed reaction is RNA(n) + a ribonucleoside 5'-triphosphate = RNA(n+1) + diphosphate. Functionally, DNA-dependent RNA polymerase catalyzes the transcription of DNA into RNA using the four ribonucleoside triphosphates as substrates. The sequence is that of DNA-directed RNA polymerase subunit gamma from Prochlorococcus marinus (strain MIT 9303).